Reading from the N-terminus, the 259-residue chain is Phosphatidylglycerol--prolipoprotein diacylglyceryl transferase (259 aa).

4 consecutive transmembrane segments (helical) span residues 12-32, 46-66, 83-103, and 109-129; these read LSLH…VYLA, IIDF…IYYV, IWNG…VLFV, and VLNP…AQAI. Arg-131 is a binding site for a 1,2-diacyl-sn-glycero-3-phospho-(1'-sn-glycerol). The next 3 membrane-spanning stretches (helical) occupy residues 167–187, 194–214, and 226–246; these read VPTF…IMVW, LLDG…RLVI, and GIRV…VFIF.

Belongs to the Lgt family.

Its subcellular location is the cell membrane. It carries out the reaction L-cysteinyl-[prolipoprotein] + a 1,2-diacyl-sn-glycero-3-phospho-(1'-sn-glycerol) = an S-1,2-diacyl-sn-glyceryl-L-cysteinyl-[prolipoprotein] + sn-glycerol 1-phosphate + H(+). Its pathway is protein modification; lipoprotein biosynthesis (diacylglyceryl transfer). Its function is as follows. Catalyzes the transfer of the diacylglyceryl group from phosphatidylglycerol to the sulfhydryl group of the N-terminal cysteine of a prolipoprotein, the first step in the formation of mature lipoproteins. This is Phosphatidylglycerol--prolipoprotein diacylglyceryl transferase from Streptococcus equi subsp. zooepidemicus (strain H70).